The chain runs to 130 residues: Small ribosomal subunit protein uS11 (130 aa).

Belongs to the universal ribosomal protein uS11 family. In terms of assembly, part of the 30S ribosomal subunit. Interacts with proteins S7 and S18. Binds to IF-3.

Its function is as follows. Located on the platform of the 30S subunit, it bridges several disparate RNA helices of the 16S rRNA. Forms part of the Shine-Dalgarno cleft in the 70S ribosome. This is Small ribosomal subunit protein uS11 from Synechococcus sp. (strain CC9605).